The primary structure comprises 215 residues: Proteasome subunit beta inpE (215 aa).

The protein belongs to the peptidase T1B family.

The protein resides in the cytoplasm. The protein localises to the nucleus. It carries out the reaction Cleavage of peptide bonds with very broad specificity.. Functionally, proteasome subunit beta type-6; part of the inp gene cluster that mediates the biosynthesis of fellutamide B, a mycotoxin that acts as a proteasome inhibitor. In the first step of fellutabmide B biosynthesis inpC activates 3-hydroxydodecanoic acid to generate 3-hydroxydodecanoyl-AMP that is then loaded onto the T0 domain of inpB. The 3-hydroxydodecanoyl-S-phosphopantetheinyl-T0 is sequentially extended with L-Asn and L-Gln by the two CAT modules of inpB. The linear lipodipeptide from inpB is then transferred onto inpA for the addition of the third amino acid, L-Leu. Reductive releasing of the lipotripeptide by the TE domain of inpA produces (2S)-fellutamide B. InpF might be involved in the release and transfer of the lipodipeptide from inpB to inpA. The inp cluster-encoded proteasome subunit inpE confers resistance to internally produced fellutamides. The MFS efflux transporter inpD may contribute to fellutamide resistance as well. The protein is Proteasome subunit beta inpE (inpE) of Emericella nidulans (strain FGSC A4 / ATCC 38163 / CBS 112.46 / NRRL 194 / M139) (Aspergillus nidulans).